The chain runs to 401 residues: Nicotinamide/nicotinic acid mononucleotide adenylyltransferase 1 (401 aa).

Disordered stretches follow at residues 1–30 (MDPTRAPDFKPPSADEELIPPPDPESKIPK) and 48–123 (APFN…RGVQ). Over residues 52-69 (IKRKKKHPKHHHHHHHSR) the composition is skewed to basic residues. Phosphoserine is present on residues Ser91, Ser95, Ser96, and Ser111. Ser173 and Phe174 together coordinate NAD(+). Residue His181 coordinates ATP. 6 residues coordinate NAD(+): Thr253, Gly288, Asp290, Trp301, Arg320, and Asn351. 356-359 (TKVR) contacts ATP.

Belongs to the eukaryotic NMN adenylyltransferase family. In terms of assembly, homotetramer. Ni(2+) serves as cofactor.

It is found in the cytoplasm. It localises to the nucleus. It catalyses the reaction beta-nicotinamide D-ribonucleotide + ATP + H(+) = diphosphate + NAD(+). The catalysed reaction is nicotinate beta-D-ribonucleotide + ATP + H(+) = deamido-NAD(+) + diphosphate. It functions in the pathway cofactor biosynthesis; NAD(+) biosynthesis; deamido-NAD(+) from nicotinate D-ribonucleotide: step 1/1. It participates in cofactor biosynthesis; NAD(+) biosynthesis; NAD(+) from nicotinamide D-ribonucleotide: step 1/1. Its function is as follows. Catalyzes the formation of NAD(+) from nicotinamide mononucleotide (NMN) and ATP. Can also use the deamidated form; nicotinic acid mononucleotide (NaMN) as substrate to form deamido-NAD(+) (NaAD). Key enzyme in both de novo and salvage pathways for NAD(+) biosynthesis. Predominantly acts in the salvage pathways via NMN. The sequence is that of Nicotinamide/nicotinic acid mononucleotide adenylyltransferase 1 from Saccharomyces cerevisiae (strain ATCC 204508 / S288c) (Baker's yeast).